The chain runs to 385 residues: Probable splicing factor YJU2B (385 aa).

The tract at residues 1–26 (MGERKGQNKYYPPDFNPEKHGSLNRY) is disordered. S40 bears the Phosphoserine mark. The stretch at 182–215 (LNSMLRRHFREKKKAMQEEEEKDQALQAKANLAI) forms a coiled coil. Positions 256–385 (FPSAQGPSTS…VADYSDSESE (130 aa)) are disordered. Residues 260–270 (QGPSTSSSKAS) are compositionally biased toward polar residues. The residue at position 306 (S306) is a Phosphoserine. Composition is skewed to polar residues over residues 307 to 316 (PQCTADNSLS) and 359 to 373 (GSSQEDLLHPNTPNA).

It belongs to the CWC16 family.

Its subcellular location is the nucleus. Its function is as follows. May be involved in mRNA splicing. This chain is Probable splicing factor YJU2B, found in Rattus norvegicus (Rat).